Consider the following 1034-residue polypeptide: Presequence protease, mitochondrial (1034 aa).

Residues 1–29 (MLKGGMLSRWKMWSPQYKILRNHLINFKS) constitute a mitochondrion transit peptide. Zn(2+) is bound at residue histidine 128. Residue glutamate 131 is the Proton acceptor of the active site. Zn(2+)-binding residues include histidine 132 and glutamate 229.

It belongs to the peptidase M16 family. PreP subfamily. In terms of assembly, homodimer. The cofactor is Zn(2+).

Its subcellular location is the mitochondrion. In terms of biological role, ATP-independent protease that degrades mitochondrial transit peptides after their cleavage. Also degrades other unstructured peptides. The polypeptide is Presequence protease, mitochondrial (Drosophila melanogaster (Fruit fly)).